The primary structure comprises 511 residues: ATP synthase subunit alpha 2 (511 aa).

Gly173 to Ser180 lines the ATP pocket.

Belongs to the ATPase alpha/beta chains family. In terms of assembly, F-type ATPases have 2 components, CF(1) - the catalytic core - and CF(0) - the membrane proton channel. CF(1) has five subunits: alpha(3), beta(3), gamma(1), delta(1), epsilon(1). CF(0) has three main subunits: a(1), b(2) and c(9-12). The alpha and beta chains form an alternating ring which encloses part of the gamma chain. CF(1) is attached to CF(0) by a central stalk formed by the gamma and epsilon chains, while a peripheral stalk is formed by the delta and b chains.

It is found in the cell inner membrane. It carries out the reaction ATP + H2O + 4 H(+)(in) = ADP + phosphate + 5 H(+)(out). In terms of biological role, produces ATP from ADP in the presence of a proton gradient across the membrane. The alpha chain is a regulatory subunit. The protein is ATP synthase subunit alpha 2 of Nitrosospira multiformis (strain ATCC 25196 / NCIMB 11849 / C 71).